The following is a 418-amino-acid chain: tRNA-2-methylthio-N(6)-dimethylallyladenosine synthase (418 aa).

An MTTase N-terminal domain is found at 2–118; the sequence is PGYYLWTIGC…WREIPEGFIL (117 aa). Cys11, Cys47, Cys81, Cys134, Cys138, and Cys141 together coordinate [4Fe-4S] cluster. The region spanning 120–351 is the Radical SAM core domain; that stretch reads LRPPVSANVT…EDLQKETVGK (232 aa). In terms of domain architecture, TRAM spans 346-414; sequence KETVGKANAA…PWSLQAKLVN (69 aa).

It belongs to the methylthiotransferase family. MiaB subfamily. In terms of assembly, monomer. It depends on [4Fe-4S] cluster as a cofactor.

The protein resides in the cytoplasm. It catalyses the reaction N(6)-dimethylallyladenosine(37) in tRNA + (sulfur carrier)-SH + AH2 + 2 S-adenosyl-L-methionine = 2-methylsulfanyl-N(6)-dimethylallyladenosine(37) in tRNA + (sulfur carrier)-H + 5'-deoxyadenosine + L-methionine + A + S-adenosyl-L-homocysteine + 2 H(+). Catalyzes the methylthiolation of N6-(dimethylallyl)adenosine (i(6)A), leading to the formation of 2-methylthio-N6-(dimethylallyl)adenosine (ms(2)i(6)A) at position 37 in tRNAs that read codons beginning with uridine. The sequence is that of tRNA-2-methylthio-N(6)-dimethylallyladenosine synthase from Dehalococcoides mccartyi (strain ATCC BAA-2100 / JCM 16839 / KCTC 5957 / BAV1).